Here is an 86-residue protein sequence, read N- to C-terminus: Small ribosomal subunit protein uS17 (86 aa).

This sequence belongs to the universal ribosomal protein uS17 family. Part of the 30S ribosomal subunit.

Functionally, one of the primary rRNA binding proteins, it binds specifically to the 5'-end of 16S ribosomal RNA. The protein is Small ribosomal subunit protein uS17 of Lactococcus lactis subsp. cremoris (strain MG1363).